Consider the following 321-residue polypeptide: UPF0676 protein C1494.01 (321 aa).

Positions 159 to 267 (EEDVLRLLKY…RQTIAYFVTP (109 aa)) constitute a Fe2OG dioxygenase domain.

The protein belongs to the UPF0676 family.

The protein resides in the cytoplasm. It is found in the nucleus. This Schizosaccharomyces pombe (strain 972 / ATCC 24843) (Fission yeast) protein is UPF0676 protein C1494.01.